We begin with the raw amino-acid sequence, 36 residues long: Pancreatic polypeptide (36 aa).

A Tyrosine amide modification is found at Tyr36.

Belongs to the NPY family.

Its subcellular location is the secreted. Hormone secreted by pancreatic cells that acts as a regulator of pancreatic and gastrointestinal functions probably by signaling through the G protein-coupled receptor NPY4R2. In Macaca mulatta (Rhesus macaque), this protein is Pancreatic polypeptide (PPY).